Reading from the N-terminus, the 331-residue chain is Nucleotide sugar transporter SLC35B4 (331 aa).

The next 11 membrane-spanning stretches (helical) occupy residues 4-24 (AFAV…LELL), 30-50 (GCGN…GFLF), 59-79 (PAIP…VSVV), 92-112 (LHMI…IIIL), 124-144 (IALV…QVTV), 153-173 (GFQA…ALLM), 201-221 (ALPL…VVLF), 229-249 (VPVI…NVVT), 251-267 (YVCI…CTSL), 268-288 (TVTL…ILYF), and 294-314 (MWHW…TEVW). Residues 326–331 (KDDKKD) carry the Mediates endoplasmic reticulum retention motif.

The protein belongs to the nucleotide-sugar transporter family. SLC35B subfamily.

Its subcellular location is the endoplasmic reticulum membrane. It carries out the reaction UDP-N-acetyl-alpha-D-glucosamine(in) + UDP-alpha-D-glucuronate(out) = UDP-N-acetyl-alpha-D-glucosamine(out) + UDP-alpha-D-glucuronate(in). The enzyme catalyses UDP-alpha-D-xylose(in) + UDP-alpha-D-glucuronate(out) = UDP-alpha-D-xylose(out) + UDP-alpha-D-glucuronate(in). In terms of biological role, antiporter that transports nucleotide sugars across the endoplasmic reticulum (ER) membrane in exchange for another nucleotide sugar. May couple UDP-alpha-D-glucuronate (UDP-GlcA) or UDP-alpha-D-xylose (UDP-Xyl) efflux to UDP-alpha-D-glucuronate (UDP-GlcA) influx into the ER lumen, which in turn stimulates glucuronidation and excretion of endobiotics and xenobiotics. This is Nucleotide sugar transporter SLC35B4 (Slc35b4) from Mus musculus (Mouse).